Reading from the N-terminus, the 79-residue chain is Conotoxin PnMSGL-03 (79 aa).

Residues 1–20 (MSRLGIMVLTLLLLVFIVTS) form the signal peptide. A propeptide spanning residues 21 to 44 (HQDAGEKQATQRDAINFRWRRSLI) is cleaved from the precursor. 3 disulfide bridges follow: Cys-52-Cys-64, Cys-56-Cys-73, and Cys-63-Cys-77. Leu-78 is subject to Leucine amide.

The protein belongs to the conotoxin O3 superfamily. Expressed by the venom duct.

The protein resides in the secreted. This is Conotoxin PnMSGL-03 from Conus pennaceus (Feathered cone).